The following is a 76-amino-acid chain: Lividin-2 (76 aa).

An N-terminal signal peptide occupies residues 1–22 (MFTLKKSLLLLFFLGTISLSLC). The propeptide occupies 23 to 41 (QEERNADEEDGGEVTEEEV). Cys70 and Cys76 are joined by a disulfide.

In terms of tissue distribution, expressed by the skin glands.

It is found in the secreted. Functionally, antimicrobial peptide. The polypeptide is Lividin-2 (Odorrana livida (Green mountain frog)).